Consider the following 344-residue polypeptide: DNA-directed RNA polymerase subunit alpha (344 aa).

An alpha N-terminal domain (alpha-NTD) region spans residues 1–238 (MKVIKTAPLI…KQLGVFGEKP (238 aa)). The alpha C-terminal domain (alpha-CTD) stretch occupies residues 253-344 (DAKDLSAKIE…EKLEDKGGND (92 aa)).

Belongs to the RNA polymerase alpha chain family. As to quaternary structure, homodimer. The RNAP catalytic core consists of 2 alpha, 1 beta, 1 beta' and 1 omega subunit. When a sigma factor is associated with the core the holoenzyme is formed, which can initiate transcription.

It catalyses the reaction RNA(n) + a ribonucleoside 5'-triphosphate = RNA(n+1) + diphosphate. Its function is as follows. DNA-dependent RNA polymerase catalyzes the transcription of DNA into RNA using the four ribonucleoside triphosphates as substrates. This is DNA-directed RNA polymerase subunit alpha from Helicobacter acinonychis (strain Sheeba).